Reading from the N-terminus, the 82-residue chain is Cysteine proteinase inhibitor A (82 aa).

This sequence belongs to the cystatin family.

Strong inhibitor of papain and ficin but poor inhibitor of cathepsin H, B and L. In Helianthus annuus (Common sunflower), this protein is Cysteine proteinase inhibitor A.